An 864-amino-acid chain; its full sequence is Protein translocase subunit SecA (864 aa).

Residues glutamine 85, 103–107 (GEGKT), and aspartate 542 contribute to the ATP site.

The protein belongs to the SecA family. In terms of assembly, monomer and homodimer. Part of the essential Sec protein translocation apparatus which comprises SecA, SecYEG and auxiliary proteins SecDF. Other proteins may also be involved.

Its subcellular location is the cell inner membrane. The protein localises to the cytoplasm. The catalysed reaction is ATP + H2O + cellular proteinSide 1 = ADP + phosphate + cellular proteinSide 2.. Functionally, part of the Sec protein translocase complex. Interacts with the SecYEG preprotein conducting channel. Has a central role in coupling the hydrolysis of ATP to the transfer of proteins into and across the cell membrane, serving as an ATP-driven molecular motor driving the stepwise translocation of polypeptide chains across the membrane. This is Protein translocase subunit SecA from Fervidobacterium nodosum (strain ATCC 35602 / DSM 5306 / Rt17-B1).